The chain runs to 617 residues: Glutamyl-tRNA(Gln) amidotransferase subunit E (617 aa).

It belongs to the GatB/GatE family. GatE subfamily. In terms of assembly, heterodimer of GatD and GatE.

The enzyme catalyses L-glutamyl-tRNA(Gln) + L-glutamine + ATP + H2O = L-glutaminyl-tRNA(Gln) + L-glutamate + ADP + phosphate + H(+). Allows the formation of correctly charged Gln-tRNA(Gln) through the transamidation of misacylated Glu-tRNA(Gln) in organisms which lack glutaminyl-tRNA synthetase. The reaction takes place in the presence of glutamine and ATP through an activated gamma-phospho-Glu-tRNA(Gln). The GatDE system is specific for glutamate and does not act on aspartate. This Natronomonas pharaonis (strain ATCC 35678 / DSM 2160 / CIP 103997 / JCM 8858 / NBRC 14720 / NCIMB 2260 / Gabara) (Halobacterium pharaonis) protein is Glutamyl-tRNA(Gln) amidotransferase subunit E.